The chain runs to 1079 residues: Extracellular calcium-sensing receptor (1079 aa).

Positions 1–19 (MAWFGYCLALLALTWHSSA) are cleaved as a signal peptide. Over 20 to 610 (YGPDQRAQKK…KEIEFLAWTE (591 aa)) the chain is Extracellular. Residues 22-188 (PDQRAQKKGD…QFKSFLRTIP (167 aa)) are ligand-binding 1 (LB1). The cysteines at positions 60 and 101 are disulfide-linked. 66-70 (RGFRW) lines the phosphate pocket. Residues I81, S84, L87, and L88 each contribute to the Ca(2+) site. A glycan (N-linked (GlcNAc...) asparagine) is linked at N90. Position 100 (T100) interacts with Ca(2+). Residue N130 is glycosylated (N-linked (GlcNAc...) asparagine). T145 lines the Ca(2+) pocket. L-tryptophan contacts are provided by S147, A168, and S170. Residues S170, P188, D190, E231, and D234 each contribute to the Ca(2+) site. The interval 189–324 (NDEHQATAMA…GGTIGFGLKA (136 aa)) is ligand-binding 2 (LB2). 7 disulfides stabilise this stretch: C236/C561, C358/C395, C437/C449, C542/C562, C546/C565, C568/C582, and C585/C598. Residues D238 and S240 each contribute to the spermine site. N-linked (GlcNAc...) asparagine glycosylation is found at N261 and N287. E297 serves as a coordination point for Ca(2+). Position 297 (E297) interacts with L-tryptophan. N-linked (GlcNAc...) asparagine glycosylation occurs at N386. Phosphate is bound at residue 415–417 (RIS). Residues N446, N468, and N488 are each glycosylated (N-linked (GlcNAc...) asparagine). Residue Y489 participates in Ca(2+) binding. A glycan (N-linked (GlcNAc...) asparagine) is linked at N541. The tract at residues 542 to 612 (CSRDCQAGTR…IEFLAWTEPF (71 aa)) is cysteine-rich (CR). G557 lines the Ca(2+) pocket. N-linked (GlcNAc...) asparagine glycosylation occurs at N594. The helical transmembrane segment at 611 to 636 (PFGIALTLFAVLGIFLTAFVLGVFIK) threads the bilayer. Over 637 to 648 (FRNTPIVKATNR) the chain is Cytoplasmic. The segment at 637–648 (FRNTPIVKATNR) is intracellular loop 1 (ICL1). A helical membrane pass occupies residues 649-668 (ELSYLLLFSLLCCFSSSLFF). Over 669–674 (IGEPQD) the chain is Extracellular. Residues 675 to 698 (WTCRLRQPAFGISFVLCISCILVK) traverse the membrane as a helical segment. Residues 699–722 (TNRVLLVFEAKIPTSFHRKWWGLN) are Cytoplasmic-facing. The segment at 699–722 (TNRVLLVFEAKIPTSFHRKWWGLN) is intracellular loop 2 (ICL2). The helical transmembrane segment at 723 to 745 (LQFLLVFLCTFMQIVICIIWLYT) threads the bilayer. Over 746-769 (APPSSYRNHELEDEIIFITCHEGS) the chain is Extracellular. Residues 770-789 (LMALGSLIGYTCLLAAICFF) form a helical membrane-spanning segment. Residues 790 to 805 (FAFKSRKLPENFNEAK) lie on the Cytoplasmic side of the membrane. The tract at residues 790–805 (FAFKSRKLPENFNEAK) is intracellular loop 3 (ICL3). A helical transmembrane segment spans residues 806 to 828 (FITFSMLIFFIVWISFIPAYAST). Residues 829 to 832 (YGKF) are Extracellular-facing. The chain crosses the membrane as a helical span at residues 833-854 (VSAVEVIAILAASFGLLACIFF). The Cytoplasmic portion of the chain corresponds to 855 to 1079 (NKVYIILFKP…SSVTENILHS (225 aa)). Positions 855-1079 (NKVYIILFKP…SSVTENILHS (225 aa)) are C-terminus. Residues 880–900 (AFKVAARATLRRPNISRKRSS) are interaction with RNF19A. T888 is subject to Phosphothreonine. The arginine-rich retention motif stretch occupies residues 890–898 (RRPNISRKR). The interval 894 to 964 (ISRKRSSSLG…QQQPQQPRCK (71 aa)) is disordered. Position 899 is a phosphoserine (S899). The segment covering 900–918 (SSLGGSTGSIPSSSISSKS) has biased composition (low complexity). A compositionally biased stretch (basic and acidic residues) spans 919–931 (NSEDRFPQPERQK). At S920 the chain carries Phosphoserine. Low complexity predominate over residues 932 to 961 (QQQPLALTQQEQQQQPLTLQPQQQQQPQQP). Residue S1062 is modified to Phosphoserine.

Belongs to the G-protein coupled receptor 3 family. Homodimer; disulfide-linked. Interacts with VCP. Interacts with ARRB1. Post-translationally, phosphorylation at Thr-888 by PKC impairs coupling with G(q)/G(11) G-proteins, while it does not affect G(i)/G(o)-coupling. Phosphorylation at Ser-899 by PKA promote plasma membrane localization. In terms of processing, ubiquitinated by RNF19A; which induces proteasomal degradation. Epidermis, kidney and cartilage.

It localises to the cell membrane. Its activity is regulated as follows. In resting state, adopts an open conformation, anion-binding promoting the inactive configuration. Upon aromatic amino acid-binding, the groove in the extracellular venus flytrap module is closed, thereby inducing the formation of a novel homodimer interface between subunits. Calcium ions stabilize the active state by enhancing homodimer interactions between membrane-proximal domains to fully activate the receptor. Upon activation, the homodimer adopts an asymmetric configuration of the 7-transmembrane region that primes one protomer for G-protein coupling. G-protein binding expands the transmembrane dimer interface; the restriction imposed by the receptor dimer, in combination with intracellular loop 2 (ICL2), enables G-protein activation by facilitating conformational transition of G-protein alpha. Coupling to different classes of G-proteins results in distinct CASR-G-protein interfaces. Functionally, G-protein-coupled receptor that senses changes in the extracellular concentration of calcium ions and plays a key role in maintaining calcium homeostasis. Senses fluctuations in the circulating calcium concentration: activated by elevated circulating calcium, leading to decreased parathyroid hormone (PTH) secretion in parathyroid glands. In kidneys, acts as a key regulator of renal tubular calcium resorption. Ligand binding causes a conformation change that triggers signaling via guanine nucleotide-binding proteins (G-proteins) and modulates the activity of downstream effectors. CASR is coupled with different G(q)/G(11), G(i)/G(o)- or G(s)-classes of G-proteins depending on the context. In the parathyroid and kidney, CASR signals through G(q)/G(11) and G(i)/G(o) G-proteins: G(q)/G(11) coupling activates phospholipase C-beta, releasing diacylglycerol (DAG) and inositol 1,4,5-trisphosphate (IP3) second messengers, while G(i)/G(o) coupling mediates inhibition of adenylate cyclase activity. The G-protein-coupled receptor activity is activated by a co-agonist mechanism: aromatic amino acids, such as Trp or Phe, act concertedly with divalent cations, such as calcium or magnesium, to achieve full receptor activation. Acts as an activator of the NLRP3 inflammasome via G(i)/G(o)-mediated signaling: down-regulation of cyclic AMP (cAMP) relieving NLRP3 inhibition by cAMP. Acts as a regulator of proton-sensing receptor GPR68 in a seesaw manner: CASR-mediated signaling inhibits GPR68 signaling in response to extracellular calcium, while GPR68 inhibits CASR in presence of extracellular protons. The chain is Extracellular calcium-sensing receptor from Mus musculus (Mouse).